Consider the following 265-residue polypeptide: Cell division protein DivIB (265 aa).

The Cytoplasmic segment spans residues 1–30; that stretch reads MKNSKVIKLQDRVPKLKNQQKKKKKNVNHR. Residues 31 to 51 form a helical membrane-spanning segment; sequence LILYISILFLLVLFLIYFRSP. Over 52–265 the chain is Extracellular; it reads LSNIKKISVF…NRMIVFNTLS (214 aa). Positions 53 to 121 constitute a POTRA domain; it reads SNIKKISVFG…NKIDVHIEEY (69 aa).

This sequence belongs to the FtsQ/DivIB family. DivIB subfamily.

The protein resides in the cell membrane. Functionally, cell division protein that may be involved in stabilizing or promoting the assembly of the division complex. This Bacillus anthracis protein is Cell division protein DivIB.